Consider the following 231-residue polypeptide: Ribonuclease 3 (231 aa).

Positions 5–134 (QKGIKEDFGI…FIGALYKDQG (130 aa)) constitute an RNase III domain. A Mg(2+)-binding site is contributed by Glu47. Asp51 is an active-site residue. Positions 120 and 123 each coordinate Mg(2+). Residue Glu123 is part of the active site. Residues 160 to 230 (DYKSKLQELL…AKKAYQDVTP (71 aa)) enclose the DRBM domain.

It belongs to the ribonuclease III family. As to quaternary structure, homodimer. It depends on Mg(2+) as a cofactor.

It localises to the cytoplasm. The enzyme catalyses Endonucleolytic cleavage to 5'-phosphomonoester.. Its function is as follows. Digests double-stranded RNA. Involved in the processing of primary rRNA transcript to yield the immediate precursors to the large and small rRNAs (23S and 16S). Processes some mRNAs, and tRNAs when they are encoded in the rRNA operon. Processes pre-crRNA and tracrRNA of type II CRISPR loci if present in the organism. In Oenococcus oeni (strain ATCC BAA-331 / PSU-1), this protein is Ribonuclease 3.